A 620-amino-acid polypeptide reads, in one-letter code: Somatic embryogenesis receptor kinase 4 (620 aa).

The signal sequence occupies residues 1–33 (MTSSKMEQRSLLCFLYLLLLFNFTLRVAGNAEG). At 34–234 (DALTQLKNSL…GGQMTAAIAG (201 aa)) the chain is on the extracellular side. LRR repeat units lie at residues 100 to 122 (NLQYLELYSNNITGEIPEELGDL), 124 to 146 (ELVSLDLYANSISGPIPSSLGKL), 148 to 170 (KLRFLRLNNNSLSGEIPMTLTSV), 171 to 193 (QLQVLDISNNRLSGDIPVNGSFS), and 194 to 215 (LFTPISFANNSLTDLPEPPPTS). The N-linked (GlcNAc...) asparagine glycan is linked to N110. N-linked (GlcNAc...) asparagine glycosylation is found at N156, N189, and N202. The interval 205-227 (LTDLPEPPPTSTSPTPPPPSGGQ) is disordered. Over residues 209 to 224 (PEPPPTSTSPTPPPPS) the composition is skewed to pro residues. A helical membrane pass occupies residues 235–255 (GVAAGAALLFAVPAIAFAWWL). The Cytoplasmic portion of the chain corresponds to 256-620 (RRKPQDHFFD…IENDYPSGPR (365 aa)). T291 bears the Phosphothreonine mark. The Protein kinase domain occupies 294–591 (FSNKNVLGRG…KEEMPIHDFN (298 aa)). The residue at position 295 (S295) is a Phosphoserine. ATP contacts are provided by residues 300 to 308 (LGRGGFGKV) and K322. 2 positions are modified to phosphoserine: S375 and S378. Catalysis depends on D421, which acts as the Proton acceptor. Phosphothreonine is present on residues T454, T455, and T460. Y468 is subject to Phosphotyrosine. Residue S470 is modified to Phosphoserine. T471 carries the phosphothreonine modification. Phosphoserine is present on S475. The residue at position 551 (T551) is a Phosphothreonine.

The protein belongs to the protein kinase superfamily. Ser/Thr protein kinase family. Interacts with the EF-Tu receptor EFR and FLS2 in a specific ligand-induced manner. Interacts with TMK4/BARK1. Interacts with ERECTA in a EPF2-induced manner. Interacts with ERL1 in a EPF1-induced manner. Interacts with TMM. Forms a complex with MIK2 in response to SCOOP12 perception. Autophosphorylated on Thr and Tyr residues.

Its subcellular location is the cell membrane. It catalyses the reaction L-seryl-[protein] + ATP = O-phospho-L-seryl-[protein] + ADP + H(+). The catalysed reaction is L-threonyl-[protein] + ATP = O-phospho-L-threonyl-[protein] + ADP + H(+). The enzyme catalyses L-tyrosyl-[protein] + ATP = O-phospho-L-tyrosyl-[protein] + ADP + H(+). Functionally, dual specificity kinase acting on both serine/threonine- and tyrosine-containing substrates. Positively regulates the BR-dependent plant growth pathway and negatively regulates the BR-independent cell-death pathway. Required during SCOOP small peptides (e.g. SCOOP10 and SCOOP12) perception and signaling; associates with MIK2 as a coreceptor upon MIK2 perception of SCOOP peptides, and relays the signaling through the activation of receptor-like cytosolic kinases (RLCKs) BIK1 and PBL1. In Arabidopsis thaliana (Mouse-ear cress), this protein is Somatic embryogenesis receptor kinase 4.